The primary structure comprises 248 residues: Aspartate/glutamate leucyltransferase (248 aa).

Belongs to the R-transferase family. Bpt subfamily.

It is found in the cytoplasm. The enzyme catalyses N-terminal L-glutamyl-[protein] + L-leucyl-tRNA(Leu) = N-terminal L-leucyl-L-glutamyl-[protein] + tRNA(Leu) + H(+). The catalysed reaction is N-terminal L-aspartyl-[protein] + L-leucyl-tRNA(Leu) = N-terminal L-leucyl-L-aspartyl-[protein] + tRNA(Leu) + H(+). Functionally, functions in the N-end rule pathway of protein degradation where it conjugates Leu from its aminoacyl-tRNA to the N-termini of proteins containing an N-terminal aspartate or glutamate. This Methylobacterium sp. (strain 4-46) protein is Aspartate/glutamate leucyltransferase.